A 260-amino-acid polypeptide reads, in one-letter code: (R)-2-hydroxyglutaryl-CoA dehydratase activating ATPase (260 aa).

12–16 lines the ATP pocket; it reads STASK. Residues Cys127 and Cys166 each coordinate [4Fe-4S] cluster. The ATP site is built by Gln220 and Gln243.

It belongs to the HgdC family. As to quaternary structure, homodimer. [4Fe-4S] cluster is required as a cofactor. The cofactor is Mg(2+).

It catalyses the reaction ATP + H2O = ADP + phosphate + H(+). It participates in amino-acid degradation; L-glutamate degradation via hydroxyglutarate pathway; crotonoyl-CoA from L-glutamate: step 4/5. With respect to regulation, inactivated by exposure to air within less than 15 minutes. Functionally, involved in the fermentation of L-glutamate via the hydroxyglutarate pathway. HgdC (CompA) has a very low ATPase activity, whose the role is to activate dehydratase HgdA-HgdB complex and then maintain an appropriate redox state via an ATP-dependent electron transfer. The dehydratase requires only catalytic amounts of ATP and substoichiometric amounts of HgdC (CompA) to be functional. This Acidaminococcus fermentans (strain ATCC 25085 / DSM 20731 / CCUG 9996 / CIP 106432 / VR4) protein is (R)-2-hydroxyglutaryl-CoA dehydratase activating ATPase.